The primary structure comprises 231 residues: Augmin complex subunit dgt2 (231 aa).

Residues 128–199 (QEADLSCDQK…VQTKAELLRG (72 aa)) adopt a coiled-coil conformation.

In terms of assembly, component of the augmin complex composed of dgt2, dgt3, dgt4, dgt5, dgt6, msd1, msd5 and wac. The complex interacts directly or indirectly with microtubules and is required for centrosome-independent generation of spindle microtubules. dgt2 interacts directly with wac (via coiled coil). In adult females, detected only in the abdomen with no expression in the head or thorax (at protein level).

Its subcellular location is the cytoplasm. The protein resides in the cytoskeleton. It is found in the spindle. It localises to the spindle pole. Its function is as follows. As part of the augmin complex, plays a role in centrosome-independent generation of spindle microtubules. The complex is required for mitotic spindle assembly through its involvement in localizing gamma-tubulin to spindle microtubules. dgt2 binds to microtubules in vitro. In Drosophila melanogaster (Fruit fly), this protein is Augmin complex subunit dgt2.